Here is a 95-residue protein sequence, read N- to C-terminus: MLHTLMKSPFETNISFFSGMLKKTDDFLALQDGVLIALIDNIFLKKITFSSENLYVIKEDVYARGIHKNISSSFILISYIDFVNLTLKNKKQIIW.

This sequence belongs to the DsrH/TusB family. Heterohexamer, formed by a dimer of trimers. The hexameric TusBCD complex contains 2 copies each of TusB, TusC and TusD. The TusBCD complex interacts with TusE.

It is found in the cytoplasm. Its function is as follows. Part of a sulfur-relay system required for 2-thiolation of 5-methylaminomethyl-2-thiouridine (mnm(5)s(2)U) at tRNA wobble positions. In Buchnera aphidicola subsp. Schizaphis graminum (strain Sg), this protein is Protein TusB.